The primary structure comprises 200 residues: Holliday junction branch migration complex subunit RuvA (200 aa).

The domain I stretch occupies residues 1–64 (MFTYFRGELI…EDLMQLFGFL (64 aa)). The segment at 65–143 (EEEERQLFRL…KLRPSGGTKS (79 aa)) is domain II. The flexible linker stretch occupies residues 144–148 (VSRLS). Residues 148-200 (SESSMRDDAVNALVTLGFLRSVAQKAVTESLTSLRNPQVEDLVRDALLTIRTP) are domain III.

It belongs to the RuvA family. In terms of assembly, homotetramer. Forms an RuvA(8)-RuvB(12)-Holliday junction (HJ) complex. HJ DNA is sandwiched between 2 RuvA tetramers; dsDNA enters through RuvA and exits via RuvB. An RuvB hexamer assembles on each DNA strand where it exits the tetramer. Each RuvB hexamer is contacted by two RuvA subunits (via domain III) on 2 adjacent RuvB subunits; this complex drives branch migration. In the full resolvosome a probable DNA-RuvA(4)-RuvB(12)-RuvC(2) complex forms which resolves the HJ.

The protein localises to the cytoplasm. The RuvA-RuvB-RuvC complex processes Holliday junction (HJ) DNA during genetic recombination and DNA repair, while the RuvA-RuvB complex plays an important role in the rescue of blocked DNA replication forks via replication fork reversal (RFR). RuvA specifically binds to HJ cruciform DNA, conferring on it an open structure. The RuvB hexamer acts as an ATP-dependent pump, pulling dsDNA into and through the RuvAB complex. HJ branch migration allows RuvC to scan DNA until it finds its consensus sequence, where it cleaves and resolves the cruciform DNA. This chain is Holliday junction branch migration complex subunit RuvA, found in Chlorobium phaeobacteroides (strain BS1).